A 219-amino-acid polypeptide reads, in one-letter code: Redox-sensing transcriptional repressor Rex (219 aa).

The segment at residues 17-56 is a DNA-binding region (H-T-H motif); it reads LYYRIFKRFHRENIVKTSSKQIAEAIGIDPATVRRDFSYF. 91–96 contributes to the NAD(+) binding site; it reads GVGNIG.

The protein belongs to the transcriptional regulatory Rex family. In terms of assembly, homodimer.

The protein localises to the cytoplasm. In terms of biological role, modulates transcription in response to changes in cellular NADH/NAD(+) redox state. The polypeptide is Redox-sensing transcriptional repressor Rex (Streptococcus thermophilus (strain ATCC BAA-491 / LMD-9)).